The primary structure comprises 292 residues: 4-hydroxybenzoate octaprenyltransferase (292 aa).

A run of 9 helical transmembrane segments spans residues 24 to 44, 47 to 67, 97 to 117, 119 to 139, 145 to 165, 171 to 191, 214 to 234, 238 to 258, and 270 to 290; these read IGTL…NAGM, LTNF…GCVI, AISL…MLSV, TILL…MKRY, VVLG…SINA, WLLF…YAMV, HIIG…GALN, LSYW…QVLI, and FLNN…SYPV.

It belongs to the UbiA prenyltransferase family. The cofactor is Mg(2+).

It localises to the cell inner membrane. The catalysed reaction is all-trans-octaprenyl diphosphate + 4-hydroxybenzoate = 4-hydroxy-3-(all-trans-octaprenyl)benzoate + diphosphate. The protein operates within cofactor biosynthesis; ubiquinone biosynthesis. Its function is as follows. Catalyzes the prenylation of para-hydroxybenzoate (PHB) with an all-trans polyprenyl group. Mediates the second step in the final reaction sequence of ubiquinone-8 (UQ-8) biosynthesis, which is the condensation of the polyisoprenoid side chain with PHB, generating the first membrane-bound Q intermediate 3-octaprenyl-4-hydroxybenzoate. The sequence is that of 4-hydroxybenzoate octaprenyltransferase from Pseudoalteromonas translucida (strain TAC 125).